We begin with the raw amino-acid sequence, 686 residues long: Aminodeoxychorismate synthase (686 aa).

Residues 2-194 (RTLLIDNYDS…RDLALAHHRA (193 aa)) enclose the Glutamine amidotransferase type-1 domain. The active-site Nucleophile is Cys81. Residues His168 and Glu170 contribute to the active site. The segment at 233-686 (LDSSSVLEGA…LDGSAVAGAR (454 aa)) is PABB component.

It in the C-terminal section; belongs to the anthranilate synthase component I family.

It catalyses the reaction chorismate + L-glutamine = 4-amino-4-deoxychorismate + L-glutamate. It participates in antibiotic biosynthesis. Functionally, involved in chloramphenicol biosynthesis. Catalyzes the biosynthesis of 4-amino-4-deoxychorismate (ADC) from chorismate and glutamine. The chain is Aminodeoxychorismate synthase from Streptomyces venezuelae (strain ATCC 10712 / CBS 650.69 / DSM 40230 / JCM 4526 / NBRC 13096 / PD 04745).